A 288-amino-acid chain; its full sequence is MVGVGGGDVEDVTPRPGGCQISGRGARGCNGIPGAAAWEAALPRRRPRRHPSVNPRSRAAGSPRTRGRRTKERPSGSRLGDHGRGRALPGGRVGGRGRGRAPERVGGRGRGRGTAAPRAAPAARGSRPGPAGTMAAGSITTLPALPEDGGSGAFPPGHFKDPKRLYCKNGGFFLRIHPDGRVDGVREKSDPHIKLQLQAEERGVVSIKGVCANRYLAMKEDGRLLASKCVTDECFFFERLESNNYNTYRSRKYTSWYVALKRTGQYKLGSKTGPGQKAILFLPMSAKS.

Residues 1-142 (MVGVGGGDVE…TMAAGSITTL (142 aa)) constitute a propeptide that is removed on maturation. Positions 1 to 156 (MVGVGGGDVE…EDGGSGAFPP (156 aa)) are disordered. Positions 72-84 (ERPSGSRLGDHGR) are enriched in basic and acidic residues. Residues R108, R110, and R112 each carry the omega-N-methylarginine; alternate modification. Residues R108, R110, and R112 each carry the symmetric dimethylarginine; alternate modification. Residues 113–132 (GTAAPRAAPAARGSRPGPAG) are compositionally biased toward low complexity. Residue N169 participates in heparin binding. The short motif at 179 to 181 (DGR) is the Cell attachment site; atypical element. Residue Y215 is modified to Phosphotyrosine; by TEC. A Cell attachment site; atypical motif is present at residues 221-223 (DGR). K228 is covalently cross-linked (Glycyl lysine isopeptide (Lys-Gly) (interchain with G-Cter in SUMO1)). Residues 261 to 277 (KRTGQYKLGSKTGPGQK) are heparin-binding.

It belongs to the heparin-binding growth factors family. Monomer. Homodimer. Interacts with FGFR1, FGFR2, FGFR3 and FGFR4. Affinity between fibroblast growth factors (FGFs) and their receptors is increased by heparan sulfate glycosaminoglycans that function as coreceptors. Interacts with CSPG4, FGFBP1 and TEC. Found in a complex with FGFBP1, FGF1 and FGF2. Interacts with FGFBP3. Interacts with integrin ITGAV:ITGB3; the interaction is required for FGF2 signaling. Interacts with SNORC (via the extracellular domain). Interacts with glypican GPC3. In terms of processing, phosphorylation at Tyr-215 regulates FGF2 unconventional secretion.

It localises to the secreted. The protein localises to the nucleus. Its function is as follows. Acts as a ligand for FGFR1, FGFR2, FGFR3 and FGFR4. Also acts as an integrin ligand which is required for FGF2 signaling. Binds to integrin ITGAV:ITGB3. Plays an important role in the regulation of cell survival, cell division, cell differentiation and cell migration. Functions as a potent mitogen in vitro. Can induce angiogenesis. Mediates phosphorylation of ERK1/2 and thereby promotes retinal lens fiber differentiation. The sequence is that of Fibroblast growth factor 2 from Pan troglodytes (Chimpanzee).